Consider the following 412-residue polypeptide: F-box/WD repeat-containing protein 4 (412 aa).

An F-box domain is found at 25–71; that stretch reads GPALWRLPEELLLLICSYLDMRALGRLAQVCRWLRRFTSCDLLWRRI. WD repeat units lie at residues 154-190, 193-229, 236-277, 283-321, 327-366, and 373-409; these read RPLG…IHKI, TFTV…VWPL, QCLH…IWDL, MTHL…YWDL, KCVM…LWDR, and HAFP…VLDF.

As to quaternary structure, part of a SCF (SKP1-cullin-F-box) protein ligase complex. Interacts with POUF51. In terms of tissue distribution, expressed in brain, kidney, lung and liver.

Functionally, probably recognizes and binds to some phosphorylated proteins and promotes their ubiquitination and degradation. Likely to be involved in key signaling pathways crucial for normal limb development. May participate in Wnt signaling. This chain is F-box/WD repeat-containing protein 4 (FBXW4), found in Homo sapiens (Human).